The chain runs to 396 residues: Phosphoglycerate kinase (396 aa).

Substrate is bound by residues 21–23, R37, 60–63, R121, and R154; these read DFN and HLGR. Residues K205, G296, E327, and 353–356 each bind ATP; that span reads GGDS.

This sequence belongs to the phosphoglycerate kinase family. In terms of assembly, monomer.

Its subcellular location is the cytoplasm. The catalysed reaction is (2R)-3-phosphoglycerate + ATP = (2R)-3-phospho-glyceroyl phosphate + ADP. Its pathway is carbohydrate degradation; glycolysis; pyruvate from D-glyceraldehyde 3-phosphate: step 2/5. The sequence is that of Phosphoglycerate kinase from Anaeromyxobacter dehalogenans (strain 2CP-C).